Consider the following 209-residue polypeptide: Glycine cleavage system H-like protein gcvH4 (209 aa).

The span at 35 to 51 shows a compositional bias: low complexity; the sequence is NNNNNNNNNNNNNNNNN. Residues 35–56 are disordered; sequence NNNNNNNNNNNNNNNNNRNKKL. A Lipoyl-binding domain is found at 73 to 159; sequence FATIGITNYV…KTTTTTTKIK (87 aa).

This sequence belongs to the GcvH family.

The sequence is that of Glycine cleavage system H-like protein gcvH4 (gcvH4) from Dictyostelium discoideum (Social amoeba).